Reading from the N-terminus, the 154-residue chain is SsrA-binding protein (154 aa).

It belongs to the SmpB family.

It localises to the cytoplasm. Its function is as follows. Required for rescue of stalled ribosomes mediated by trans-translation. Binds to transfer-messenger RNA (tmRNA), required for stable association of tmRNA with ribosomes. tmRNA and SmpB together mimic tRNA shape, replacing the anticodon stem-loop with SmpB. tmRNA is encoded by the ssrA gene; the 2 termini fold to resemble tRNA(Ala) and it encodes a 'tag peptide', a short internal open reading frame. During trans-translation Ala-aminoacylated tmRNA acts like a tRNA, entering the A-site of stalled ribosomes, displacing the stalled mRNA. The ribosome then switches to translate the ORF on the tmRNA; the nascent peptide is terminated with the 'tag peptide' encoded by the tmRNA and targeted for degradation. The ribosome is freed to recommence translation, which seems to be the essential function of trans-translation. This Lachnoclostridium phytofermentans (strain ATCC 700394 / DSM 18823 / ISDg) (Clostridium phytofermentans) protein is SsrA-binding protein.